The sequence spans 302 residues: Ribosomal protein L11 methyltransferase (302 aa).

Residues Thr148, Gly169, Asp191, and Asn237 each contribute to the S-adenosyl-L-methionine site.

It belongs to the methyltransferase superfamily. PrmA family.

It localises to the cytoplasm. The catalysed reaction is L-lysyl-[protein] + 3 S-adenosyl-L-methionine = N(6),N(6),N(6)-trimethyl-L-lysyl-[protein] + 3 S-adenosyl-L-homocysteine + 3 H(+). In terms of biological role, methylates ribosomal protein L11. This is Ribosomal protein L11 methyltransferase from Desulfosudis oleivorans (strain DSM 6200 / JCM 39069 / Hxd3) (Desulfococcus oleovorans).